The chain runs to 556 residues: 2-succinyl-5-enolpyruvyl-6-hydroxy-3-cyclohexene-1-carboxylate synthase (556 aa).

Belongs to the TPP enzyme family. MenD subfamily. As to quaternary structure, homodimer. The cofactor is Mg(2+). It depends on Mn(2+) as a cofactor. Requires thiamine diphosphate as cofactor.

The catalysed reaction is isochorismate + 2-oxoglutarate + H(+) = 5-enolpyruvoyl-6-hydroxy-2-succinyl-cyclohex-3-ene-1-carboxylate + CO2. Its pathway is quinol/quinone metabolism; 1,4-dihydroxy-2-naphthoate biosynthesis; 1,4-dihydroxy-2-naphthoate from chorismate: step 2/7. It participates in quinol/quinone metabolism; menaquinone biosynthesis. In terms of biological role, catalyzes the thiamine diphosphate-dependent decarboxylation of 2-oxoglutarate and the subsequent addition of the resulting succinic semialdehyde-thiamine pyrophosphate anion to isochorismate to yield 2-succinyl-5-enolpyruvyl-6-hydroxy-3-cyclohexene-1-carboxylate (SEPHCHC). The polypeptide is 2-succinyl-5-enolpyruvyl-6-hydroxy-3-cyclohexene-1-carboxylate synthase (Escherichia coli (strain SMS-3-5 / SECEC)).